We begin with the raw amino-acid sequence, 62 residues long: Potassium channel toxin kappa-KTx 3.3 (62 aa).

Positions 1 to 26 (MKSTLMTASLLILVLLSIVDYASVYA) are cleaved as a signal peptide. The propeptide occupies 27–36 (ELIDSEISME). Disulfide bonds link Cys43–Cys61 and Cys47–Cys57.

The protein belongs to the short scorpion toxin superfamily. Potassium channel inhibitor kappa-KTx family. Kappa-KTx 3 subfamily. Expressed by the venom gland.

It is found in the secreted. Its function is as follows. Potassium channel inhibitor (Kv). This Heterometrus petersii (Asian forest scorpion) protein is Potassium channel toxin kappa-KTx 3.3.